Here is a 347-residue protein sequence, read N- to C-terminus: UPF0284 protein YN1551_0030 (347 aa).

It belongs to the UPF0284 family.

This is UPF0284 protein YN1551_0030 from Saccharolobus islandicus (strain Y.N.15.51 / Yellowstone #2) (Sulfolobus islandicus).